We begin with the raw amino-acid sequence, 239 residues long: Ditrans,polycis-undecaprenyl-diphosphate synthase ((2E,6E)-farnesyl-diphosphate specific) (239 aa).

The active site involves D18. D18 contributes to the Mg(2+) binding site. Residues 19–22 (GNGR), W23, R31, H35, and 63–65 (SSE) each bind substrate. N66 acts as the Proton acceptor in catalysis. Residues W67, R69, R186, and 192–194 (RIS) each bind substrate. A Mg(2+)-binding site is contributed by E205.

This sequence belongs to the UPP synthase family. Homodimer. Mg(2+) serves as cofactor.

The catalysed reaction is 8 isopentenyl diphosphate + (2E,6E)-farnesyl diphosphate = di-trans,octa-cis-undecaprenyl diphosphate + 8 diphosphate. Catalyzes the sequential condensation of isopentenyl diphosphate (IPP) with (2E,6E)-farnesyl diphosphate (E,E-FPP) to yield (2Z,6Z,10Z,14Z,18Z,22Z,26Z,30Z,34E,38E)-undecaprenyl diphosphate (di-trans,octa-cis-UPP). UPP is the precursor of glycosyl carrier lipid in the biosynthesis of bacterial cell wall polysaccharide components such as peptidoglycan and lipopolysaccharide. This chain is Ditrans,polycis-undecaprenyl-diphosphate synthase ((2E,6E)-farnesyl-diphosphate specific), found in Haemophilus influenzae (strain ATCC 51907 / DSM 11121 / KW20 / Rd).